Reading from the N-terminus, the 322-residue chain is Fructose-1,6-bisphosphatase class 1 3 (322 aa).

4 residues coordinate Mg(2+): glutamate 84, aspartate 103, leucine 105, and aspartate 106. Residues 106-109 (DGSS), asparagine 198, and lysine 262 each bind substrate. Glutamate 268 is a Mg(2+) binding site.

Belongs to the FBPase class 1 family. Homotetramer. Mg(2+) serves as cofactor.

The protein resides in the cytoplasm. It carries out the reaction beta-D-fructose 1,6-bisphosphate + H2O = beta-D-fructose 6-phosphate + phosphate. Its pathway is carbohydrate biosynthesis; gluconeogenesis. This is Fructose-1,6-bisphosphatase class 1 3 from Pseudoalteromonas translucida (strain TAC 125).